Consider the following 382-residue polypeptide: Histidinol-phosphate aminotransferase (382 aa).

Lys-215 carries the post-translational modification N6-(pyridoxal phosphate)lysine. A disordered region spans residues 363 to 382; that stretch reads NIDNQSKTHSQTSSIRKGTI.

The protein belongs to the class-II pyridoxal-phosphate-dependent aminotransferase family. Histidinol-phosphate aminotransferase subfamily. Homodimer. The cofactor is pyridoxal 5'-phosphate.

It catalyses the reaction L-histidinol phosphate + 2-oxoglutarate = 3-(imidazol-4-yl)-2-oxopropyl phosphate + L-glutamate. It functions in the pathway amino-acid biosynthesis; L-histidine biosynthesis; L-histidine from 5-phospho-alpha-D-ribose 1-diphosphate: step 7/9. The chain is Histidinol-phosphate aminotransferase from Yersinia pseudotuberculosis serotype O:1b (strain IP 31758).